Consider the following 302-residue polypeptide: Lipooligosaccharide biosynthesis protein lex-1 (302 aa).

7 tandem repeats follow at residues 42–45 (SINQ), 46–49 (SINQ), 50–53 (SINQ), 54–57 (SINQ), 58–61 (SINQ), 62–65 (SINQ), and 66–69 (SINQ). The 7 X 4 AA tandem repeats of S-I-N-Q stretch occupies residues 42-69 (SINQSINQSINQSINQSINQSINQSINQ).

It belongs to the glycosyltransferase 25 family.

Involved in extracellular lipooligosaccharide (LOS) biosynthesis and virulence expression. Involved in the synthesis of the oligosaccharide moiety of the LOS molecule by adding GalNAc. This Haemophilus influenzae (strain ATCC 51907 / DSM 11121 / KW20 / Rd) protein is Lipooligosaccharide biosynthesis protein lex-1 (lex1).